The primary structure comprises 343 residues: Methionine import ATP-binding protein MetN 2 (343 aa).

Residues 2-241 enclose the ABC transporter domain; sequence IEFKDVTKTF…PQQAVTKRFV (240 aa). 38 to 45 serves as a coordination point for ATP; sequence GYSGAGKS.

Belongs to the ABC transporter superfamily. Methionine importer (TC 3.A.1.24) family. In terms of assembly, the complex is composed of two ATP-binding proteins (MetN), two transmembrane proteins (MetI) and a solute-binding protein (MetQ).

Its subcellular location is the cell membrane. The catalysed reaction is L-methionine(out) + ATP + H2O = L-methionine(in) + ADP + phosphate + H(+). The enzyme catalyses D-methionine(out) + ATP + H2O = D-methionine(in) + ADP + phosphate + H(+). In terms of biological role, part of the ABC transporter complex MetNIQ involved in methionine import. Responsible for energy coupling to the transport system. The sequence is that of Methionine import ATP-binding protein MetN 2 from Lactiplantibacillus plantarum (strain ATCC BAA-793 / NCIMB 8826 / WCFS1) (Lactobacillus plantarum).